The following is a 352-amino-acid chain: Sodium-lithium/proton antiporter (352 aa).

Helical transmembrane passes span 11–31, 32–52, 61–81, 159–179, 216–236, 241–261, 271–291, and 317–337; these read ILLL…PVSV, PLII…WMQF, AVTI…TYAV, IPEY…FMLE, AQFL…FWIT, IVMS…SIVI, IVGD…LLAI, and IGLQ…VIAF.

Belongs to the autoinducer-2 exporter (AI-2E) (TC 2.A.86) family.

The protein resides in the cell membrane. Catalyzes the pH-dependent efflux of sodium and lithium in exchange for external protons. The chain is Sodium-lithium/proton antiporter from Halobacillus andaensis.